Reading from the N-terminus, the 98-residue chain is Co-chaperonin GroES (98 aa).

Belongs to the GroES chaperonin family. Heptamer of 7 subunits arranged in a ring. Interacts with the chaperonin GroEL.

It is found in the cytoplasm. In terms of biological role, together with the chaperonin GroEL, plays an essential role in assisting protein folding. The GroEL-GroES system forms a nano-cage that allows encapsulation of the non-native substrate proteins and provides a physical environment optimized to promote and accelerate protein folding. GroES binds to the apical surface of the GroEL ring, thereby capping the opening of the GroEL channel. The sequence is that of Co-chaperonin GroES from Bartonella bacilliformis (strain ATCC 35685 / KC583 / Herrer 020/F12,63).